We begin with the raw amino-acid sequence, 125 residues long: Small ribosomal subunit protein uS12m (125 aa).

Disordered stretches follow at residues 1–50 (MPTL…SAPR) and 106–125 (GIPN…PKSI). Residues 10–23 (HGREEKRRTDRTRA) show a composition bias toward basic and acidic residues.

It belongs to the universal ribosomal protein uS12 family.

The protein localises to the mitochondrion. Functionally, protein S12 is involved in the translation initiation step. This chain is Small ribosomal subunit protein uS12m (RPS12), found in Magnolia soulangeana (Saucer magnolia).